The following is a 98-amino-acid chain: Trp operon repressor homolog (98 aa).

Residues 59-82 (QRQVSQMLGVGVATITRGSNELKA) mediate DNA binding.

This sequence belongs to the TrpR family. In terms of assembly, homodimer.

The protein resides in the cytoplasm. Functionally, this protein is an aporepressor. When complexed with L-tryptophan it binds the operator region of the trp operon and prevents the initiation of transcription. The sequence is that of Trp operon repressor homolog from Vibrio atlanticus (strain LGP32) (Vibrio splendidus (strain Mel32)).